The chain runs to 405 residues: Protein NDRG4 (405 aa).

A disordered region spans residues 352-405; sequence AGAVPSASMTRLARSRTASLTSASSVDGARPRPCTQSESSDGIGQINHTMEVSC. The segment covering 361–376 has biased composition (low complexity); the sequence is TRLARSRTASLTSASS. Polar residues predominate over residues 385–405; sequence CTQSESSDGIGQINHTMEVSC.

It belongs to the NDRG family.

It localises to the cytoplasm. The protein localises to the cytosol. In terms of biological role, contributes to the maintenance of intracerebral BDNF levels within the normal range. May enhance growth factor-induced ERK1 and ERK2 phosphorylation. May attenuate growth factor-promoted ELK1 phosphorylation in a microtubule-dependent manner. This Xenopus tropicalis (Western clawed frog) protein is Protein NDRG4.